The sequence spans 534 residues: Sodium-dependent lysophosphatidylcholine symporter 1 (534 aa).

Residues 1 to 39 are Cytoplasmic-facing; that stretch reads MAKGEGAESGSAAGLLPTSILQASERPVQVKKEPKKKQQ. A helical transmembrane segment spans residues 40–69; the sequence is LSICNKLCYAVGGAPYQLTGCALGFFLQIY. The Extracellular segment spans residues 70-80; it reads LLDVAKVEPLP. A helical membrane pass occupies residues 81–101; the sequence is ASIILFVGRAWDAFTDPLVGF. Over 102-113 the chain is Cytoplasmic; it reads CISKSSWTRLGR. The chain crosses the membrane as a helical span at residues 114–133; sequence LMPWIIFSTPLAIIAYFLIW. Topologically, residues 134–148 are extracellular; it reads FVPDFPSGTESSHGF. A helical transmembrane segment spans residues 149–173; sequence LWYLLFYCLFETLVTCFHVPYSALT. Topologically, residues 174–180 are cytoplasmic; the sequence is MFISTEQ. The helical transmembrane segment at 181 to 212 threads the bilayer; it reads SERDSATAYRMTVEVLGTVIGTAIQGQIVGQA. The Extracellular segment spans residues 213–232; that stretch reads KAPCLQDQNGSVVVSEVANR. Cys-216 and Cys-464 are oxidised to a cystine. N-linked (GlcNAc...) asparagine glycans are attached at residues Asn-221 and Asn-231. The helical transmembrane segment at 233–266 threads the bilayer; the sequence is TQSTASLKDTQNAYLLAAGIIASIYVLCAFILIL. Residues 267–297 are Cytoplasmic-facing; it reads GVREQRELYESQQAESMPFFQGLRLVMGHGP. A helical membrane pass occupies residues 298 to 324; that stretch reads YVKLIAGFLFTSLAFMLVEGNFALFCT. Residues 325-335 lie on the Extracellular side of the membrane; that stretch reads YTLDFRNEFQN. Residues 336-354 form a helical membrane-spanning segment; the sequence is LLLAIMLSATFTIPIWQWF. Topologically, residues 355 to 358 are cytoplasmic; that stretch reads LTRF. The chain crosses the membrane as a helical span at residues 359-380; it reads GKKTAVYIGISSAVPFLILVAL. Topologically, residues 381-383 are extracellular; it reads MER. A helical transmembrane segment spans residues 384–420; it reads NLIVTYVVAVAAGVSVAAAFLLPWSMLPDVIDDFHLK. The Cytoplasmic segment spans residues 421–430; the sequence is HPHSPGTEPI. A helical transmembrane segment spans residues 431–457; it reads FFSFYVFFTKFASGVSLGVSTLSLDFA. Residues 458-469 are Extracellular-facing; sequence NYQRQGCSQPEQ. A helical transmembrane segment spans residues 470–493; sequence VKFTLKMLVTMAPIILILLGLLLF. Residues 494-534 lie on the Cytoplasmic side of the membrane; it reads KLYPIDEEKRRQNKKALQALREEASSSGCSDTDSTELASIL.

This sequence belongs to the major facilitator superfamily. Post-translationally, N-glycosylated. In terms of tissue distribution, widely expressed. Exhibits an oscillatory pattern of expression in brown adipose tissue and liver consistent with a circadian rhythm. Enriched in brain micro-vessels, where it is specifically present in endothelium constituting the blood-brain barrier (at protein level).

It localises to the cell membrane. Its subcellular location is the endoplasmic reticulum membrane. It catalyses the reaction a 1-acyl-sn-glycero-3-phosphocholine(in) + Na(+)(in) = a 1-acyl-sn-glycero-3-phosphocholine(out) + Na(+)(out). The enzyme catalyses 1-(4Z,7Z,10Z,13Z,16Z,19Z-docosahexaenoyl)-sn-glycero-3-phosphocholine(in) + Na(+)(in) = 1-(4Z,7Z,10Z,13Z,16Z,19Z-docosahexaenoyl)-sn-glycero-3-phosphocholine(out) + Na(+)(out). It carries out the reaction 1-(9Z-octadecenoyl)-sn-glycero-3-phosphocholine(in) + Na(+)(in) = 1-(9Z-octadecenoyl)-sn-glycero-3-phosphocholine(out) + Na(+)(out). The catalysed reaction is 1-hexadecanoyl-sn-glycero-3-phosphocholine(in) + Na(+)(in) = 1-hexadecanoyl-sn-glycero-3-phosphocholine(out) + Na(+)(out). It catalyses the reaction a 1-acyl-sn-glycero-3-phosphoethanolamine(in) + Na(+)(in) = a 1-acyl-sn-glycero-3-phosphoethanolamine(out) + Na(+)(out). In terms of biological role, sodium-dependent lysophosphatidylcholine (LPC) symporter, which plays an essential role for blood-brain barrier formation and function. Specifically expressed in endothelium of the blood-brain barrier of micro-vessels and transports LPC into the brain. Transport of LPC is essential because it constitutes the major mechanism by which docosahexaenoic acid (DHA), an omega-3 fatty acid that is essential for normal brain growth and cognitive function, enters the brain. Transports LPC carrying long-chain fatty acids such LPC oleate and LPC palmitate with a minimum acyl chain length of 14 carbons. Does not transport docosahexaenoic acid in unesterified fatty acid. Not required for central nervous system vascular morphogenesis. This Mus musculus (Mouse) protein is Sodium-dependent lysophosphatidylcholine symporter 1.